A 226-amino-acid chain; its full sequence is Imidazoleglycerol-phosphate dehydratase (226 aa).

The segment at 23-55 is disordered; that stretch reads LTGGPIERPQPSLFASEKGANTAGPDDASQTTA.

The protein belongs to the imidazoleglycerol-phosphate dehydratase family.

The enzyme catalyses D-erythro-1-(imidazol-4-yl)glycerol 3-phosphate = 3-(imidazol-4-yl)-2-oxopropyl phosphate + H2O. It functions in the pathway amino-acid biosynthesis; L-histidine biosynthesis; L-histidine from 5-phospho-alpha-D-ribose 1-diphosphate: step 6/9. The polypeptide is Imidazoleglycerol-phosphate dehydratase (HIS3) (Maudiozyma humilis (Sour dough yeast)).